The sequence spans 217 residues: Putative 3-methyladenine DNA glycosylase (217 aa).

Residues 105-145 enclose the RPE2 insert domain; it reads SHNNVYTIDTAKIKSQITDEKTQSIIIRKNRRIMKFYIPNL.

The protein belongs to the DNA glycosylase MPG family.

In Rickettsia prowazekii (strain Madrid E), this protein is Putative 3-methyladenine DNA glycosylase.